The chain runs to 487 residues: Beta-barrel assembly-enhancing protease (487 aa).

Positions 1-27 (MFRQLKKNLVATLIAAMTIGQVAPAFA) are cleaved as a signal peptide. Position 136 (H136) interacts with Zn(2+). E137 is a catalytic residue. 2 residues coordinate Zn(2+): H140 and E201. Residue D205 is the Proton donor of the active site. 4 TPR repeats span residues 309-342 (RAAQYGRALQAMEANKYDEARKTLQPLLAAEPGN), 344-376 (WYLDLATDIDLGQNKANEAINRLKNARDLRTNP), 377-409 (VLQLNLANAYLQGGQPQEAANILNRYTFNNKDD), and 427-460 (DQELAARAEGYALAGRLDQAISLLSSASSQVKLG).

This sequence belongs to the peptidase M48 family. BepA subfamily. The cofactor is Zn(2+).

It localises to the periplasm. Its function is as follows. Functions both as a chaperone and a metalloprotease. Maintains the integrity of the outer membrane by promoting either the assembly or the elimination of outer membrane proteins, depending on their folding state. The chain is Beta-barrel assembly-enhancing protease from Escherichia coli O157:H7.